The following is a 126-amino-acid chain: Fluoride-specific ion channel FluC (126 aa).

Transmembrane regions (helical) follow at residues 4–24, 35–55, 67–87, and 97–117; these read SLLSIACGAVLGAWLRWFVGL, LGTILVNLVGGFIIGFAIALF, FVITGFCGALTTFSTFSAEVI, and FAIALITIHLMGSLLCTVLGL. 2 residues coordinate Na(+): Gly-74 and Thr-77.

It belongs to the fluoride channel Fluc/FEX (TC 1.A.43) family.

Its subcellular location is the cell inner membrane. It catalyses the reaction fluoride(in) = fluoride(out). Na(+) is not transported, but it plays an essential structural role and its presence is essential for fluoride channel function. Functionally, fluoride-specific ion channel. Important for reducing fluoride concentration in the cell, thus reducing its toxicity. In Acinetobacter baylyi (strain ATCC 33305 / BD413 / ADP1), this protein is Fluoride-specific ion channel FluC.